The chain runs to 150 residues: 6,7-dimethyl-8-ribityllumazine synthase (150 aa).

Residues Phe-11, 43–45 (VYD), and 67–69 (AVI) contribute to the 5-amino-6-(D-ribitylamino)uracil site. Residue 72–73 (AT) coordinates (2S)-2-hydroxy-3-oxobutyl phosphate. The active-site Proton donor is the His-75. Residue Leu-100 coordinates 5-amino-6-(D-ribitylamino)uracil. Arg-115 is a (2S)-2-hydroxy-3-oxobutyl phosphate binding site.

Belongs to the DMRL synthase family.

It carries out the reaction (2S)-2-hydroxy-3-oxobutyl phosphate + 5-amino-6-(D-ribitylamino)uracil = 6,7-dimethyl-8-(1-D-ribityl)lumazine + phosphate + 2 H2O + H(+). It functions in the pathway cofactor biosynthesis; riboflavin biosynthesis; riboflavin from 2-hydroxy-3-oxobutyl phosphate and 5-amino-6-(D-ribitylamino)uracil: step 1/2. In terms of biological role, catalyzes the formation of 6,7-dimethyl-8-ribityllumazine by condensation of 5-amino-6-(D-ribitylamino)uracil with 3,4-dihydroxy-2-butanone 4-phosphate. This is the penultimate step in the biosynthesis of riboflavin. The protein is 6,7-dimethyl-8-ribityllumazine synthase of Pyrobaculum arsenaticum (strain DSM 13514 / JCM 11321 / PZ6).